The chain runs to 269 residues: Protein MGF 110-1L (269 aa).

A topological domain (cytoplasmic) is located at residue Met-1. The stretch at 1–145 is one A repeat; the sequence is MLGLQIFTLL…YVRKRSLQTV (145 aa). The helical transmembrane segment at 2–18 threads the bilayer; that stretch reads LGLQIFTLLSIPTLLYT. At 19-116 the chain is on the extracellular side; it reads YELELLDLTR…HEWHEAVIRK (98 aa). An N-linked (GlcNAc...) asparagine; by host glycan is attached at Asn-75. A helical transmembrane segment spans residues 117–137; that stretch reads WQKLLTYGFYLVGCVLVANYV. Residues 138–144 are Cytoplasmic-facing; it reads RKRSLQT. The helical transmembrane segment at 145 to 165 threads the bilayer; sequence VMYLLVLLVIFFLLSQLMLYR. The B repeat unit spans residues 147-269; the sequence is YLLVLLVIFF…DNLMKKQDMM (123 aa). Residues 166–269 are Extracellular-facing; that stretch reads ELEDKKHKIG…DNLMKKQDMM (104 aa).

The protein belongs to the asfivirus MGF 110 family.

The protein resides in the host membrane. In terms of biological role, plays a role in virus cell tropism, and may be required for efficient virus replication in macrophages. This is Protein MGF 110-1L from African swine fever virus (isolate Tick/South Africa/Pretoriuskop Pr4/1996) (ASFV).